The sequence spans 264 residues: Teichoic acids export ATP-binding protein TagH (264 aa).

Residues 24 to 243 (IKDALIPKNK…YEQFLKDFKK (220 aa)) enclose the ABC transporter domain. Position 57–64 (57–64 (GINGSGKS)) interacts with ATP.

The protein belongs to the ABC transporter superfamily. Teichoic acids exporter (TC 3.A.1.104.1) family. The complex is composed of two ATP-binding proteins (TagH) and two transmembrane proteins (TagG).

It is found in the cell membrane. It catalyses the reaction ATP + H2O + teichoic acidSide 1 = ADP + phosphate + teichoic acidSide 2.. In terms of biological role, part of the ABC transporter complex TagGH involved in teichoic acids export. Responsible for energy coupling to the transport system. The polypeptide is Teichoic acids export ATP-binding protein TagH (Staphylococcus haemolyticus (strain JCSC1435)).